We begin with the raw amino-acid sequence, 351 residues long: MLRSILVALCLWLRLALGVRGAPCEAVRIPMCRHMPWNITRMPNHLHHSTQENAILAIEQYEELVDVNCSSVLRFFLCAMYAPICTLEFLHDPIKPCKSVCQRARDDCEPLMKMYNHSWPESLACDELPVYDRGVCISPEAIVTDLPEDVKWIDITPDMMVQERSFDADCKRLSPDRCKCKKVKPTLATYLSKNYSYVIHAKIKAVQRSGCNEVTTVVDVKEIFKSLSPIPRTQVPLITNSSCQCPHILPHQDVLIMCYEWRSRMMLLENCLVEKWRDQLSRRSIQWEERLQEQQRTIQDKKQIASRTSRTSRSNPPKSKGRPPAPKPASPKKNIKARSAPKKSNLKKSAS.

Residues 1-18 (MLRSILVALCLWLRLALG) form the signal peptide. An FZ domain is found at 19–139 (VRGAPCEAVR…VYDRGVCISP (121 aa)). Intrachain disulfides connect Cys24/Cys85, Cys32/Cys78, Cys69/Cys108, Cys97/Cys136, and Cys101/Cys125. 2 N-linked (GlcNAc...) asparagine glycosylation sites follow: Asn38 and Asn68. N-linked (GlcNAc...) asparagine glycans are attached at residues Asn116, Asn194, and Asn240. The NTR domain maps to 178 to 306 (CKCKKVKPTL…TIQDKKQIAS (129 aa)). Over residues 293-303 (EQQRTIQDKKQ) the composition is skewed to basic and acidic residues. A disordered region spans residues 293 to 351 (EQQRTIQDKKQIASRTSRTSRSNPPKSKGRPPAPKPASPKKNIKARSAPKKSNLKKSAS). Over residues 306–318 (SRTSRTSRSNPPK) the composition is skewed to low complexity. Residues 333-351 (KNIKARSAPKKSNLKKSAS) show a composition bias toward basic residues.

The protein belongs to the secreted frizzled-related protein (sFRP) family. Expressed in the ovary. Localized to granulosa cells of periovulatory follicles and corpora lutea. Weakly expressed in adult tissues including kidney, brain and lung.

The protein localises to the secreted. Soluble frizzled-related proteins (sFRPS) function as modulators of Wnt signaling through direct interaction with Wnts. They have a role in regulating cell growth and differentiation in specific cell types. SFRP4 plays a role in bone morphogenesis. May also act as a regulator of adult uterine morphology and function. May also increase apoptosis during ovulation possibly through modulation of FZ1/FZ4/WNT4 signaling. Has phosphaturic effects by specifically inhibiting sodium-dependent phosphate uptake. This Mus musculus (Mouse) protein is Secreted frizzled-related sequence protein 4 (Sfrp4).